Consider the following 423-residue polypeptide: uncharacterized protein (423 aa).

An N-terminal signal peptide occupies residues 1-16; the sequence is MKSRIFFITLLTIVAA. The Extracellular segment spans residues 17–402; it reads QESADQLCSS…SSSAKEEQTS (386 aa). 16 disulfide bridges follow: Cys24-Cys217, Cys33-Cys43, Cys36-Cys68, Cys46-Cys57, Cys219-Cys238, Cys230-Cys241, Cys243-Cys252, Cys254-Cys288, Cys271-Cys286, Cys280-Cys291, Cys293-Cys303, Cys305-Cys327, Cys310-Cys325, Cys319-Cys330, Cys332-Cys341, and Cys343-Cys350. N-linked (GlcNAc...) asparagine glycosylation is present at Asn65. The tract at residues 215 to 350 is cysteine-rich tandem repeats; it reads CGCECEKHPE…CSCSTASNNC (136 aa). I-EGF domains lie at 219–253, 254–304, and 305–342; these read CEKHPEINSRLCHQNGHLVCGQCVCDQSRGGDKCE, CPLA…KFCQ, and CDNDSCPLAVNGKVCSGNGVCDCGVCKCEMGWERDDCS. Asn274 is a glycosylation site (N-linked (GlcNAc...) asparagine). Asn307 carries an N-linked (GlcNAc...) asparagine glycan. The interval 354 to 406 is disordered; sequence GTPAPEEKDKPESVPEEPEATEKPDDMPSDSDLEKELDESSSAKEEQTSSSGV. A compositionally biased stretch (acidic residues) spans 380–392; the sequence is MPSDSDLEKELDE. Residues 403–421 traverse the membrane as a helical segment; it reads SSGVVSRVCVLLTFFLLVL. Residues 422–423 are Cytoplasmic-facing; it reads NF.

Belongs to the integrin beta chain family.

Its subcellular location is the membrane. This is an uncharacterized protein from Caenorhabditis elegans.